A 370-amino-acid chain; its full sequence is Actin-related protein 2/3 complex subunit 1A (370 aa).

WD repeat units follow at residues 6–45 (FLLEPITCHAWNRDRTQIALSPNNHEVHIYKKNGSQWTKA), 50–89 (EHNGHITGIDWAPKSDRIVTCGADRNAYVWSQKDGIWKPT), 140–179 (PIRSTVLSLDWHPNNVLLAAGSCDFKCRVFSAYIKEVDEK), 202–241 (GTGGWVHGVSFSASGNRLAWVSHDSTVSVADASKSVQVST), 244–284 (TEFL…TFVS), and 322–365 (LHQN…SSIQ).

The protein belongs to the WD repeat ARPC1 family. As to quaternary structure, probable component of the Arp2/3 complex in which it may replace ARPC1B.

It localises to the cytoplasm. The protein resides in the cytoskeleton. The protein localises to the nucleus. Its function is as follows. Probably functions as a component of the Arp2/3 complex which is involved in regulation of actin polymerization and together with an activating nucleation-promoting factor (NPF) mediates the formation of branched actin networks. In addition to its role in the cytoplasmic cytoskeleton, the Arp2/3 complex also promotes actin polymerization in the nucleus, thereby regulating gene transcription and repair of damaged DNA. In Mus musculus (Mouse), this protein is Actin-related protein 2/3 complex subunit 1A (Arpc1a).